A 147-amino-acid chain; its full sequence is Cyanate hydratase (147 aa).

Catalysis depends on residues Arg88, Glu91, and Ser114.

The protein belongs to the cyanase family.

The catalysed reaction is cyanate + hydrogencarbonate + 3 H(+) = NH4(+) + 2 CO2. Functionally, catalyzes the reaction of cyanate with bicarbonate to produce ammonia and carbon dioxide. The sequence is that of Cyanate hydratase from Methylobacillus flagellatus (strain ATCC 51484 / DSM 6875 / VKM B-1610 / KT).